The sequence spans 122 residues: MIQSFTRLNVADNSGAKEIMAIKVLGGSKRRYASVGDVIVASVKKALPNGKVKKGQVVKAVVVRTKKEIQRENGSLIRFDDNAAVILDNKNEPIGTRIFGPVAREVRYKNFMKIVSLAPEVL.

This sequence belongs to the universal ribosomal protein uL14 family. As to quaternary structure, part of the 50S ribosomal subunit. Forms a cluster with proteins L3 and L19. In the 70S ribosome, L14 and L19 interact and together make contacts with the 16S rRNA in bridges B5 and B8.

Binds to 23S rRNA. Forms part of two intersubunit bridges in the 70S ribosome. In Nitratiruptor sp. (strain SB155-2), this protein is Large ribosomal subunit protein uL14.